We begin with the raw amino-acid sequence, 498 residues long: ATP synthase subunit beta, chloroplastic (498 aa).

ATP is bound at residue 172-179 (GGAGVGKT).

Belongs to the ATPase alpha/beta chains family. As to quaternary structure, F-type ATPases have 2 components, CF(1) - the catalytic core - and CF(0) - the membrane proton channel. CF(1) has five subunits: alpha(3), beta(3), gamma(1), delta(1), epsilon(1). CF(0) has four main subunits: a(1), b(1), b'(1) and c(9-12).

It is found in the plastid. It localises to the chloroplast thylakoid membrane. The catalysed reaction is ATP + H2O + 4 H(+)(in) = ADP + phosphate + 5 H(+)(out). Functionally, produces ATP from ADP in the presence of a proton gradient across the membrane. The catalytic sites are hosted primarily by the beta subunits. The protein is ATP synthase subunit beta, chloroplastic of Vitis vinifera (Grape).